Here is a 1607-residue protein sequence, read N- to C-terminus: Thrombospondin type-1 domain-containing protein 7B (1607 aa).

An N-terminal signal peptide occupies residues 1–31; that stretch reads MFLRSDLAVTHWVSRSMRKLFLVLSLLLSQA. Over 32 to 1556 the chain is Extracellular; sequence AHLEGRKDNQ…QPLDPDGRVK (1525 aa). TSP type-1 domains lie at 40-98, 102-177, 179-233, 336-392, 399-482, 484-543, 601-661, 662-735, 737-796, 797-869, 871-924, 925-999, 1001-1126, 1128-1182, 1183-1246, 1248-1303, 1304-1369, and 1371-1432; these read NQFL…RVCD, DLFQ…IPCP, DCVV…VSCP, DCET…IAEG, PRYS…VPCS, DCIV…PMCH, DCVV…HSCT, QLYW…LPCK, DCLV…SLCP, SYRW…IPCR, DCTF…CPCD, TFMS…IPCP, DCKL…LLCP, ECVM…ENCF, QFQY…VECV, NCQL…TPCY, SWVL…VPCP, and DCHI…GKCY. N-linked (GlcNAc...) asparagine glycosylation is found at N150 and N219. 3 disulfides stabilise this stretch: C411–C477, C431–C481, and C442–C466. 3 cysteine pairs are disulfide-bonded: C602/C643, C613/C617, and C655/C660. A glycan (N-linked (GlcNAc...) asparagine) is linked at N683. 3 disulfide bridges follow: C738–C779, C749–C753, and C789–C795. A glycan (N-linked (GlcNAc...) asparagine) is linked at N757. N842 carries an N-linked (GlcNAc...) asparagine glycan. N933 carries an N-linked (GlcNAc...) asparagine glycan. 5 cysteine pairs are disulfide-bonded: C937-C994, C960-C998, C971-C984, C1002-C1039, and C1013-C1017. An N-linked (GlcNAc...) asparagine glycan is attached at N985. N1105 is a glycosylation site (N-linked (GlcNAc...) asparagine). The cysteines at positions 1121 and 1125 are disulfide-linked. N1187 and N1199 each carry an N-linked (GlcNAc...) asparagine glycan. Cystine bridges form between C1249–C1287, C1260–C1264, and C1297–C1302. N-linked (GlcNAc...) asparagine glycans are attached at residues N1309 and N1335. Disulfide bonds link C1372–C1416, C1383–C1387, and C1426–C1431. N-linked (GlcNAc...) asparagine glycosylation is found at N1457 and N1525. Residues 1557 to 1577 form a helical membrane-spanning segment; the sequence is MWVYGVSGGSFLIMIFLVFTS. Topologically, residues 1578 to 1607 are cytoplasmic; that stretch reads YLVCKKPKPHQSTPRHQKPLTLAYDGDLDM.

It localises to the membrane. This is Thrombospondin type-1 domain-containing protein 7B from Mus musculus (Mouse).